A 507-amino-acid polypeptide reads, in one-letter code: Beta-Ala-His dipeptidase (507 aa).

The signal sequence occupies residues 1 to 26; that stretch reads MDPKLGRMAASLLAVLLLLLERGMFS. Position 132 (His-132) interacts with Zn(2+). The active site involves Asp-134. Asp-165 contributes to the Zn(2+) binding site. Catalysis depends on Glu-199, which acts as the Proton acceptor. Glu-200 lines the Zn(2+) pocket. Ser-219 carries the phosphoserine modification. Asp-228 is a Zn(2+) binding site. Residues Asn-322 and Asn-382 are each glycosylated (N-linked (GlcNAc...) asparagine). A Zn(2+)-binding site is contributed by His-478.

This sequence belongs to the peptidase M20A family. Homodimer. Requires Zn(2+) as cofactor. As to expression, found in serum and adult nervous central system. Absent in serum from patients with homocarnosinosis.

It is found in the secreted. It carries out the reaction Preferential hydrolysis of the beta-Ala-|-His dipeptide (carnosine), and also anserine, Xaa-|-His dipeptides and other dipeptides including homocarnosine.. The enzyme catalyses carnosine + H2O = beta-alanine + L-histidine. It catalyses the reaction anserine + H2O = N(pros)-methyl-L-histidine + beta-alanine. The catalysed reaction is L-alanyl-L-histidine + H2O = L-histidine + L-alanine. It carries out the reaction glycyl-L-histidine + H2O = L-histidine + glycine. The enzyme catalyses L-homocarnosine + H2O = 4-aminobutanoate + L-histidine. Its activity is regulated as follows. Activated by cadmium ions. Inhibited by the metal chelator 1,10-o-phenantrolin. The inhibitory concentration 50% (IC(50)) is 5 uM. Its function is as follows. Catalyzes the peptide bond hydrolysis in Xaa-His dipeptides, displaying the highest activity toward carnosine (beta-alanyl-L-histidine) and anserine (beta-alanyl-3-methyl-histidine). In Homo sapiens (Human), this protein is Beta-Ala-His dipeptidase.